A 60-amino-acid polypeptide reads, in one-letter code: Large ribosomal subunit protein bL32 (60 aa).

The span at 1 to 16 shows a compositional bias: basic residues; it reads MAVPRRKTSPSRRGMR. The tract at residues 1 to 60 is disordered; it reads MAVPRRKTSPSRRGMRRSADAIKKPTYAEDKDSGELRRPHHLDLKTGMYKGRQVLIKKES. Over residues 17 to 44 the composition is skewed to basic and acidic residues; the sequence is RSADAIKKPTYAEDKDSGELRRPHHLDL.

Belongs to the bacterial ribosomal protein bL32 family.

This chain is Large ribosomal subunit protein bL32, found in Rhodopseudomonas palustris (strain BisA53).